A 184-amino-acid polypeptide reads, in one-letter code: MDRGEQGLLRTDTVPEEAEDAAATISATETLSEEEQEELRRELAKVEEEIQTLSQVLAAREKHLAEIKRKLGINSLQELKQNIAKGWQDVTATSAYKKTSETLSQAGQKASAAFSSVGSVITKKLEDVKNSPTFKSFEEKVENLKSKVGGTKPAGGDFGEVLNSTANASATSGEPVPEQTQEGL.

A disordered region spans residues 1 to 43 (MDRGEQGLLRTDTVPEEAEDAAATISATETLSEEEQEELRREL). A coiled-coil region spans residues 22 to 74 (AATISATETLSEEEQEELRRELAKVEEEIQTLSQVLAAREKHLAEIKRKLGIN). Phosphoserine is present on Ser-136. The disordered stretch occupies residues 147-184 (KVGGTKPAGGDFGEVLNSTANASATSGEPVPEQTQEGL). Residues 162-184 (LNSTANASATSGEPVPEQTQEGL) show a composition bias toward polar residues.

The protein belongs to the TPD52 family. In terms of assembly, forms a homodimer or heterodimer with other members of the family. In terms of processing, phosphorylated in a calcium/calmodulin-dependent manner.

The sequence is that of Tumor protein D52 (TPD52) from Oryctolagus cuniculus (Rabbit).